Consider the following 377-residue polypeptide: Probable staphylococcal-like nuclease CAN3 (377 aa).

G2 is lipidated: N-myristoyl glycine. C7 carries the S-palmitoyl cysteine lipid modification. Residues 15–57 (GDHYPYYKPTSRPHYQPPHYHGQPAAPPAPPQQQPLGPHGVTP) are disordered. Residues 27-38 (PHYQPPHYHGQP) are compositionally biased toward low complexity. Residues 177-353 (NTLPVYDKCI…KAANRGLWAS (177 aa)) form the TNase-like domain. D190 is a binding site for Ca(2+). Residue R260 is part of the active site. D265 is a binding site for Ca(2+). Active-site residues include E268 and R302.

It belongs to the thermonuclease family. Ca(2+) is required as a cofactor.

Its subcellular location is the cell membrane. In terms of biological role, enzyme that catalyzes the hydrolysis of both DNA and RNA at the 5' position of the phosphodiester bond. This is Probable staphylococcal-like nuclease CAN3 from Oryza sativa subsp. japonica (Rice).